Reading from the N-terminus, the 868-residue chain is Alanine--tRNA ligase (868 aa).

Zn(2+) contacts are provided by H555, H559, C657, and H661. The interval 828 to 847 is disordered; the sequence is SQVGGKGGGRPDMAQAGGSE.

This sequence belongs to the class-II aminoacyl-tRNA synthetase family. It depends on Zn(2+) as a cofactor.

It localises to the cytoplasm. It carries out the reaction tRNA(Ala) + L-alanine + ATP = L-alanyl-tRNA(Ala) + AMP + diphosphate. Its function is as follows. Catalyzes the attachment of alanine to tRNA(Ala) in a two-step reaction: alanine is first activated by ATP to form Ala-AMP and then transferred to the acceptor end of tRNA(Ala). Also edits incorrectly charged Ser-tRNA(Ala) and Gly-tRNA(Ala) via its editing domain. The sequence is that of Alanine--tRNA ligase from Pseudoalteromonas translucida (strain TAC 125).